A 525-amino-acid chain; its full sequence is Vesicular inhibitory amino acid transporter (525 aa).

The Cytoplasmic segment spans residues 1 to 132 (MATLLRSKLT…WNVTNAIQGM (132 aa)). The chain crosses the membrane as a helical span at residues 133–153 (FVLGLPYAILHGGYLGLFLII). The Lumenal, vesicle portion of the chain corresponds to 154 to 204 (FAAVVCCYTGKILIACLYEENEDGEVVRVRDSYVAIANACCAPRFPTLGGR). A 3'-nitrotyrosine modification is found at Y186. A helical membrane pass occupies residues 205 to 225 (VVNVAQIIELVMTCILYVVVS). The Cytoplasmic segment spans residues 226–265 (GNLMYNSFPGLPVSQKSWSIIATAVLLPCAFLKNLKAVSK). The chain crosses the membrane as a helical span at residues 266–286 (FSLLCTLAHFVINILVIAYCL). The Lumenal, vesicle portion of the chain corresponds to 287–305 (SRARDWAWEKVKFYIDVKK). The chain crosses the membrane as a helical span at residues 306-326 (FPISIGIIVFSYTSQIFLPSL). At 327–341 (EGNMQQPSEFHCMMN) the chain is on the cytoplasmic side. A helical transmembrane segment spans residues 342 to 362 (WTHIAACVLKGLFALVAYLTW). The Lumenal, vesicle segment spans residues 363–383 (ADETKEVITDNLPGSIRAVVN). A helical membrane pass occupies residues 384-404 (LFLVAKALLSYPLPFFAAVEV). Over 405–438 (LEKSLFQEGSRAFFPACYGGDGRLKSWGLTLRCA) the chain is Cytoplasmic. Residues 439–459 (LVVFTLLMAIYVPHFALLMGL) traverse the membrane as a helical segment. Topologically, residues 460 to 461 (TG) are lumenal, vesicle. Residues 462–482 (SLTGAGLCFLLPSLFHLRLLW) traverse the membrane as a helical segment. At 483–489 (RKLLWHQ) the chain is on the cytoplasmic side. The chain crosses the membrane as a helical span at residues 490–510 (VFFDVAIFVIGGICSVSGFVH). At 511–525 (SLEGLIEAYRTNAED) the chain is on the lumenal, vesicle side.

It belongs to the amino acid/polyamine transporter 2 family. Brain and retina. Localized in horizontal cell tips at both rod and cone terminals.

The protein resides in the cytoplasmic vesicle membrane. It localises to the presynapse. It catalyses the reaction 4-aminobutanoate(out) + n H(+)(in) = 4-aminobutanoate(in) + n H(+)(out). The catalysed reaction is glycine(out) + n H(+)(in) = glycine(in) + n H(+)(out). It carries out the reaction beta-alanine(out) + n H(+)(in) = beta-alanine(in) + n H(+)(out). Its activity is regulated as follows. Chloride ions activate 4-aminobutanoate/H(+) transport. In terms of biological role, antiporter that exchanges vesicular protons for cytosolic 4-aminobutanoate or to a lesser extend glycine, thus allowing their secretion from nerve terminals. The transport is equally dependent on the chemical and electrical components of the proton gradient. May also transport beta-alanine. Acidification of GABAergic synaptic vesicles is a prerequisite for 4-aminobutanoate uptake. The chain is Vesicular inhibitory amino acid transporter from Mus musculus (Mouse).